The following is a 219-amino-acid chain: Uracil-DNA glycosylase (219 aa).

The Proton acceptor role is filled by Asp-61.

This sequence belongs to the uracil-DNA glycosylase (UDG) superfamily. UNG family.

The protein localises to the cytoplasm. The enzyme catalyses Hydrolyzes single-stranded DNA or mismatched double-stranded DNA and polynucleotides, releasing free uracil.. Its function is as follows. Excises uracil residues from the DNA which can arise as a result of misincorporation of dUMP residues by DNA polymerase or due to deamination of cytosine. The chain is Uracil-DNA glycosylase from Exiguobacterium sibiricum (strain DSM 17290 / CCUG 55495 / CIP 109462 / JCM 13490 / 255-15).